The primary structure comprises 379 residues: ATPase ASNA1 homolog (379 aa).

The tract at residues 1 to 20 (MSEDESNSVSCSLSLESDGY) is disordered. The segment covering 7–18 (NSVSCSLSLESD) has biased composition (low complexity). 46–53 (KGGVGKTT) serves as a coordination point for ATP. Asp75 is an active-site residue. Glu246 and Asn273 together coordinate ATP.

The protein belongs to the arsA ATPase family. Homodimer.

The protein localises to the cytoplasm. The protein resides in the endoplasmic reticulum. Functionally, ATPase required for the post-translational delivery of tail-anchored (TA) proteins to the endoplasmic reticulum. Recognizes and selectively binds the transmembrane domain of TA proteins in the cytosol. This complex then targets to the endoplasmic reticulum by membrane-bound receptors, where the tail-anchored protein is released for insertion. This process is regulated by ATP binding and hydrolysis. ATP binding drives the homodimer towards the closed dimer state, facilitating recognition of newly synthesized TA membrane proteins. ATP hydrolysis is required for insertion. Subsequently, the homodimer reverts towards the open dimer state, lowering its affinity for the membrane-bound receptor, and returning it to the cytosol to initiate a new round of targeting. The sequence is that of ATPase ASNA1 homolog from Plasmodium falciparum (isolate 3D7).